The sequence spans 882 residues: Bifunctional heparan sulfate N-deacetylase/N-sulfotransferase 1 (882 aa).

At 1 to 17 (MPALACLRRLCRHLSPQ) the chain is on the cytoplasmic side. Positions 1–169 (MPALACLRRL…VAYGVGIIGF (169 aa)) are sufficient for localization to Golgi membrane. The chain crosses the membrane as a helical; Signal-anchor for type II membrane protein span at residues 18 to 38 (AVLFLLFVFCLFSVFVSAYYL). Over 39–882 (YGWNRGLEPS…WLREDLQNTR (844 aa)) the chain is Lumenal. A heparan sulfate N-deacetylase 1 region spans residues 40–598 (GWNRGLEPSA…KRHKDIWSKE (559 aa)). 3 N-linked (GlcNAc...) asparagine glycosylation sites follow: Asn231, Asn351, and Asn401. The heparan sulfate N-sulfotransferase 1 stretch occupies residues 599–882 (KTCDRFPKLL…WLREDLQNTR (284 aa)). Lys614 (for sulfotransferase activity) is an active-site residue. 614–618 (KTGTT) is a binding site for adenosine 3',5'-bisphosphate. The N-linked (GlcNAc...) asparagine glycan is linked to Asn667. Residues Ser712 and Trp817 each coordinate adenosine 3',5'-bisphosphate. A disulfide bond links Cys818 and Cys828. An adenosine 3',5'-bisphosphate-binding site is contributed by 833–837 (KGRKY).

This sequence belongs to the sulfotransferase 1 family. NDST subfamily. In terms of assembly, monomer. Interacts with heparan sulfate co-polymerase subunits EXT1 and EXT2. Widely expressed in adult and throughout development.

Its subcellular location is the golgi apparatus membrane. The protein resides in the golgi apparatus. The protein localises to the trans-Golgi network membrane. It is found in the cis-Golgi network membrane. It catalyses the reaction N-acetyl-alpha-D-glucosaminyl-[heparan sulfate](n) + H2O = alpha-D-glucosaminyl-[heparan sulfate](n) + acetate. The catalysed reaction is alpha-D-glucosaminyl-[heparan sulfate](n) + 3'-phosphoadenylyl sulfate = N-sulfo-alpha-D-glucosaminyl-[heparan sulfate](n) + adenosine 3',5'-bisphosphate + 2 H(+). The protein operates within glycan metabolism; heparan sulfate biosynthesis. It functions in the pathway glycan metabolism; heparin biosynthesis. Its activity is regulated as follows. Inhibited by long N-sulfated sequences (more than 6 sugar residues) accumulating in its substrates heparan sulfate, and heparin. Its function is as follows. Essential bifunctional enzyme that catalyzes both the N-deacetylation and the N-sulfation of glucosamine (GlcNAc) of the glycosaminoglycan in heparan sulfate. Modifies the GlcNAc-GlcA disaccharide repeating sugar backbone to make N-sulfated heparosan, a prerequisite substrate for later modifications in heparin biosynthesis. Plays a role in determining the extent and pattern of sulfation of heparan sulfate. Participates in biosynthesis of heparan sulfate that can ultimately serve as L-selectin ligands, thereby playing a role in inflammatory response. Required for the exosomal release of SDCBP, CD63 and syndecan. This Mus musculus (Mouse) protein is Bifunctional heparan sulfate N-deacetylase/N-sulfotransferase 1.